The following is a 160-amino-acid chain: Cytochrome b6-f complex subunit 4 (160 aa).

4 helical membrane passes run L36–V56, P68–L88, F95–E115, and S131–I151.

Belongs to the cytochrome b family. PetD subfamily. As to quaternary structure, the 4 large subunits of the cytochrome b6-f complex are cytochrome b6, subunit IV (17 kDa polypeptide, petD), cytochrome f and the Rieske protein, while the 4 small subunits are petG, petL, petM and petN. The complex functions as a dimer.

The protein resides in the plastid. The protein localises to the chloroplast thylakoid membrane. In terms of biological role, component of the cytochrome b6-f complex, which mediates electron transfer between photosystem II (PSII) and photosystem I (PSI), cyclic electron flow around PSI, and state transitions. In Welwitschia mirabilis (Tree tumbo), this protein is Cytochrome b6-f complex subunit 4.